A 522-amino-acid chain; its full sequence is Probable G-protein coupled receptor egl-47 (522 aa).

Helical transmembrane passes span 140–160 (IIKLILYVNYIVLAVLLNSFL), 184–204 (ASMITATKPVINVFVIVLSAI), 238–258 (FVFFFTLLIIFFSALILKVVE), 276–296 (FILVPVLSLWNIIPLLYYHLY), 345–365 (PLLLFSLAWSLLVLCLTLYFL), 398–418 (ICWAAYQVVMAILHIIIICST), and 472–492 (LERTTFFTLISVIVTYSLLLF).

This sequence belongs to the G-protein coupled receptor family. In terms of tissue distribution, expressed in some neurons in the head, the HSN neurons and the PVQ interneurons of the tail.

Its subcellular location is the membrane. Its function is as follows. Orphan receptor. Regulates egg-laying probably by activating guanine nucleotide-binding protein goa-1, in the hermaphrodite-specific neurons (HSNs). In Caenorhabditis elegans, this protein is Probable G-protein coupled receptor egl-47.